Consider the following 84-residue polypeptide: Magnetosome protein MamG (84 aa).

Over Met-1–Lys-3 the chain is Cytoplasmic. The helical transmembrane segment at Gly-4–Val-24 threads the bilayer. Residues Ser-25 to Cys-40 are Lumenal-facing. Residues Leu-41–Gly-48 are LG repeat. The helical transmembrane segment at Leu-41–Ala-61 threads the bilayer. The Cytoplasmic portion of the chain corresponds to Cys-62–Ala-84.

Belongs to the magnetosome MamG (TC 9.B.95) protein family.

The protein resides in the magnetosome membrane. In terms of biological role, plays a role in regulating magnetite crystal size. This Magnetospirillum gryphiswaldense (strain DSM 6361 / JCM 21280 / NBRC 15271 / MSR-1) protein is Magnetosome protein MamG.